Here is a 236-residue protein sequence, read N- to C-terminus: uncharacterized protein (236 aa).

An N-terminal signal peptide occupies residues 1 to 29 (MKGGDKMKKLILLMLLLPISLIGCTDEES).

This is an uncharacterized protein from Archaeoglobus fulgidus (strain ATCC 49558 / DSM 4304 / JCM 9628 / NBRC 100126 / VC-16).